The chain runs to 191 residues: Salivary lipocalin (191 aa).

An N-terminal signal peptide occupies residues 1 to 16; sequence MKLLLLLCLGLTLASS. Asparagine 69 carries N-linked (GlcNAc...) asparagine glycosylation. Residues cysteine 84 and cysteine 176 are joined by a disulfide bond.

Belongs to the calycin superfamily. Lipocalin family. As to quaternary structure, homodimer. In the submaxillary salivary glands of mature male pigs, but absent from that of females. Expression was much lower in submaxillary glands of castrated male pigs than in sexually mature individuals.

Its subcellular location is the secreted. In terms of biological role, binds pheromones, the pheromones are released from the saliva of males and affect the sexual behavior of females. The chain is Salivary lipocalin (SAL1) from Sus scrofa (Pig).